The sequence spans 353 residues: Envelope glycoprotein I (353 aa).

A signal peptide spans 1–20 (MLLWYTTASIMRYLMVFMLF). Topologically, residues 21–274 (GIQCAAAIIY…SADVFMIAVP (254 aa)) are virion surface. N-linked (GlcNAc...) asparagine; by host glycans are attached at residues Asn40, Asn75, Asn84, Asn122, Asn138, Asn227, and Asn252. Residues 275–293 (ITASLLVILAIIIVVTVGI) traverse the membrane as a helical segment. Residues 294–353 (YRRRSSEKRKIYRPKRTKEQASTEKRERSESDVLLEAAVARLETIQEENPPHSVINPFTK) lie on the Intravirion side of the membrane. Residues 303–324 (KIYRPKRTKEQASTEKRERSES) form a disordered region. The span at 310 to 324 (TKEQASTEKRERSES) shows a compositional bias: basic and acidic residues.

Belongs to the alphaherpesvirinae glycoprotein I family. In terms of assembly, interacts with gE.

Its subcellular location is the virion membrane. The protein resides in the host cell membrane. The protein localises to the host cell junction. It is found in the host Golgi apparatus membrane. Functionally, in epithelial cells, the heterodimer gE/gI is required for the cell-to-cell spread of the virus, by sorting nascent virions to cell junctions. Once the virus reaches the cell junctions, virus particles can spread to adjacent cells extremely rapidly through interactions with cellular receptors that accumulate at these junctions. Implicated in basolateral spread in polarized cells. In neuronal cells, gE/gI is essential for the anterograde spread of the infection throughout the host nervous system. Together with US9, the heterodimer gE/gI is involved in the sorting and transport of viral structural components toward axon tips. The chain is Envelope glycoprotein I (gI) from Chlorocebus aethiops (Green monkey).